A 326-amino-acid polypeptide reads, in one-letter code: NDRG-like protein (326 aa).

This sequence belongs to the NDRG family.

This chain is NDRG-like protein, found in Dictyostelium discoideum (Social amoeba).